Here is an 85-residue protein sequence, read N- to C-terminus: UPF0291 protein SGO_0570 (85 aa).

The tract at residues 56 to 85 (EDGNDVTPEKLRQVQREKGLHGRSLDDPNS) is disordered. Basic and acidic residues predominate over residues 62–85 (TPEKLRQVQREKGLHGRSLDDPNS).

The protein belongs to the UPF0291 family.

The protein localises to the cytoplasm. The protein is UPF0291 protein SGO_0570 of Streptococcus gordonii (strain Challis / ATCC 35105 / BCRC 15272 / CH1 / DL1 / V288).